A 264-amino-acid chain; its full sequence is uncharacterized protein (264 aa).

An ATP-binding site is contributed by 15 to 22 (KGGTGKTT).

This sequence belongs to the ParA family. MinD subfamily.

This is an uncharacterized protein from Methanocaldococcus jannaschii (strain ATCC 43067 / DSM 2661 / JAL-1 / JCM 10045 / NBRC 100440) (Methanococcus jannaschii).